The chain runs to 379 residues: MEGGSSSSNGTSYLLAFGENNSGGLCPMTMMPLVTSHHAGHHPINPSNNNNVNTNCLFIPNCSNSTGTPSIMLHNNHNNNKTDDDDNNNNTGLGYYFMESDHHHHHHGNNNNNGSSSSSSSSAVKAKIMAHPHYHRLLAAYVNCQKVGAPPEVVARLEEACASAATMAGGDAAAGSSCIGEDPALDQFMEAYCEMLTKYEQELSKPLKEAMLFLQRIECQFKNLTISSSDFASNEGGDRNGSSEEDVDLHNMIDPQAEDRDLKGQLLRKYSGYLGSLKQEFMKKRKKGKLPKEARQQLLEWWNRHYKWPYPSESQKLALAESTGLDQKQINNWFINQRKRHWKPSEDMQFVVMDPSHPHYYMDNVLGNPFPMDLSHPML.

The interval 75 to 125 is disordered; that stretch reads NNHNNNKTDDDDNNNNTGLGYYFMESDHHHHHHGNNNNNGSSSSSSSSAVK. Low complexity predominate over residues 109–122; that stretch reads NNNNNGSSSSSSSS. The 21-residue stretch at 261 to 281 folds into the ELK domain; the sequence is DLKGQLLRKYSGYLGSLKQEF. The segment at residues 282 to 345 is a DNA-binding region (homeobox; TALE-type); it reads MKKRKKGKLP…NQRKRHWKPS (64 aa).

Belongs to the TALE/KNOX homeobox family. In terms of tissue distribution, expressed mainly in embryonic tissues. Weakly detected in stems and hypocotyl.

It is found in the nucleus. In terms of biological role, possible transcription activator involved in early embryonic development. Probably binds to the DNA sequence 5'-TGAC-3'. This is Homeobox protein SBH1 (H1) from Glycine max (Soybean).